A 319-amino-acid polypeptide reads, in one-letter code: Thymidylate synthase (319 aa).

DUMP contacts are provided by residues R25 and 181 to 182; that span reads RR. C201 (nucleophile) is an active-site residue. DUMP-binding positions include 221-224, N232, and 262-264; these read RSAD and HIY. A (6R)-5,10-methylene-5,6,7,8-tetrahydrofolate-binding site is contributed by D224. Position 318 (A318) interacts with (6R)-5,10-methylene-5,6,7,8-tetrahydrofolate.

This sequence belongs to the thymidylate synthase family. Bacterial-type ThyA subfamily. Homodimer.

It localises to the cytoplasm. The catalysed reaction is dUMP + (6R)-5,10-methylene-5,6,7,8-tetrahydrofolate = 7,8-dihydrofolate + dTMP. It functions in the pathway pyrimidine metabolism; dTTP biosynthesis. In terms of biological role, catalyzes the reductive methylation of 2'-deoxyuridine-5'-monophosphate (dUMP) to 2'-deoxythymidine-5'-monophosphate (dTMP) while utilizing 5,10-methylenetetrahydrofolate (mTHF) as the methyl donor and reductant in the reaction, yielding dihydrofolate (DHF) as a by-product. This enzymatic reaction provides an intracellular de novo source of dTMP, an essential precursor for DNA biosynthesis. The protein is Thymidylate synthase of Oenococcus oeni (strain ATCC BAA-331 / PSU-1).